A 299-amino-acid chain; its full sequence is CCR4-NOT transcription complex subunit 9 (299 aa).

Met1 bears the N-acetylmethionine mark.

It belongs to the CNOT9 family. As to quaternary structure, homodimer. Component of the CCR4-NOT complex; distinct complexes seem to exist that differ in the participation of probably mutually exclusive catalytic subunits. Interacts with MYB, ATF2, RARA, RARB, RARG, RXRA, RXRB and RXRG. Identified in a complex with ATF2 bound to target DNA. Interacts with NANOS2. Directly interacts with ZNF335.

It is found in the nucleus. The protein localises to the cytoplasm. It localises to the P-body. Its function is as follows. Component of the CCR4-NOT complex which is one of the major cellular mRNA deadenylases and is linked to various cellular processes including bulk mRNA degradation, miRNA-mediated repression, translational repression during translational initiation and general transcription regulation. Additional complex functions may be a consequence of its influence on mRNA expression. Involved in down-regulation of MYB- and JUN-dependent transcription. Enhances ligand-dependent transcriptional activity of nuclear hormone receptors. May play a role in cell differentiation. The protein is CCR4-NOT transcription complex subunit 9 of Bos taurus (Bovine).